Here is a 177-residue protein sequence, read N- to C-terminus: Large ribosomal subunit protein uL6 (177 aa).

This sequence belongs to the universal ribosomal protein uL6 family. Part of the 50S ribosomal subunit.

Its function is as follows. This protein binds to the 23S rRNA, and is important in its secondary structure. It is located near the subunit interface in the base of the L7/L12 stalk, and near the tRNA binding site of the peptidyltransferase center. The protein is Large ribosomal subunit protein uL6 of Bartonella bacilliformis (strain ATCC 35685 / KC583 / Herrer 020/F12,63).